Reading from the N-terminus, the 246-residue chain is MKSSSVAPRLKQERQDDCKFQEGDVNSLELRLGISSDNDQISGGGAASPWLGVGVHPWSLAARQGKAALEQAHQRPNECAVQRENRAASSAQLVGWPPVRAFRKNLSTPKPADADDLMNKVKLCSDEGHGSRCAAQERRSSSTMFVKVNLEGYAVGRKIDLKAHRSYDSLSQALQSMFHGFLSDGIATRDNELQQMEEGSKKRYVLVYEDNEGDRMLVGDVPWELFIASVKRLYIAQDPRVHAKLR.

A disordered region spans residues 1–22; that stretch reads MKSSSVAPRLKQERQDDCKFQE. Residues 10–22 show a composition bias toward basic and acidic residues; sequence LKQERQDDCKFQE. The EAR-like (transcriptional repression) motif lies at 28–32; it reads LELRL. One can recognise a PB1 domain in the interval 143–238; it reads TMFVKVNLEG…SVKRLYIAQD (96 aa).

It belongs to the Aux/IAA family. As to quaternary structure, homodimers and heterodimers. As to expression, highly expressed in flowers. Expressed in roots and seedlings.

It is found in the nucleus. Its function is as follows. Aux/IAA proteins are short-lived transcriptional factors that function as repressors of early auxin response genes at low auxin concentrations. This chain is Auxin-responsive protein IAA25 (IAA25), found in Oryza sativa subsp. japonica (Rice).